We begin with the raw amino-acid sequence, 507 residues long: Cytochrome P450 monooxygenase helB2 (507 aa).

An N-terminal signal peptide occupies residues 1-22 (MALPIILCLAVILWTSWRLLDA). Cys-436 is a binding site for heme.

Belongs to the cytochrome P450 family. Heme is required as a cofactor.

It functions in the pathway mycotoxin biosynthesis. In terms of biological role, cytochrome P450 monooxygenase; part of the gene cluster that mediates the biosynthesis of helvolic acid, an antibacterial nortriterpenoid. Protostadienol synthase helA cyclizes (3S)-oxidosqualene to (17Z)-protosta-17(20),24-dien-3-beta-ol (protostadienol). The synthesis of protostadienol is followed by several steps of monooxygenation, dehydrogenation, and acyl transfer to yield the final helvolic acid. Following the cyclization to the tetracyclic protostadienol by helA, cytochrome P450 monooxygenases helB1-mediated and helB2-mediated oxidation at C-4 and C-16, acyltransferase helD2-dependent acetylation of 16-OH, oxidation of C-21 by cytochrome P450 monooxygenase helB4, and short chain dehydrogenase helC-dependent oxidative decarboxylation yield the fusidane skeleton. This intermediate is further modified in three additional steps mediated by the cytochrome P450 monooxygenase helB3, the acyltransferase helD1, and the 3-ketosteroid 1-dehydrogenase helE to give helvolic acid. Compared with the late stages in the biosynthesis of helvolic acid, enzymes involved in the early stage modifications act in a relatively strict order. The hydroxylation of C-16 by helB1 and subsequent acetylation by helD2 should occur before the helB3-mediated oxidation of C-21. C-4 demethylation in fusidane-type antibiotics proceeds in an unusual manner though it is also achieved by oxidative decarboxylation. The methyl group at C-4 beta position is oxidized by helB1 and subsequently removed by the short chain dehydrogenase helC. This is Cytochrome P450 monooxygenase helB2 from Aspergillus fumigatus (strain ATCC MYA-4609 / CBS 101355 / FGSC A1100 / Af293) (Neosartorya fumigata).